Here is a 555-residue protein sequence, read N- to C-terminus: Dimethylaniline monooxygenase [N-oxide-forming] 4 (555 aa).

FAD is bound by residues 9-13, E32, and 40-41; these read GAGVS and LW. Residues 60 to 61 and 195 to 198 contribute to the NADP(+) site; these read TN and SGGD. The chain crosses the membrane as a helical span at residues 515 to 532; the sequence is YLKVWGAPLLLASVLLIC.

It belongs to the FMO family. FAD serves as cofactor. In terms of tissue distribution, kidney and liver.

It is found in the microsome membrane. It localises to the endoplasmic reticulum membrane. The catalysed reaction is N,N-dimethylaniline + NADPH + O2 + H(+) = N,N-dimethylaniline N-oxide + NADP(+) + H2O. In terms of biological role, this protein is involved in the oxidative metabolism of a variety of xenobiotics such as drugs and pesticides. This chain is Dimethylaniline monooxygenase [N-oxide-forming] 4 (FMO4), found in Oryctolagus cuniculus (Rabbit).